The primary structure comprises 121 residues: Large ribosomal subunit protein uL18 (121 aa).

It belongs to the universal ribosomal protein uL18 family. Part of the 50S ribosomal subunit; part of the 5S rRNA/L5/L18/L25 subcomplex. Contacts the 5S and 23S rRNAs.

Its function is as follows. This is one of the proteins that bind and probably mediate the attachment of the 5S RNA into the large ribosomal subunit, where it forms part of the central protuberance. The chain is Large ribosomal subunit protein uL18 from Leptothrix cholodnii (strain ATCC 51168 / LMG 8142 / SP-6) (Leptothrix discophora (strain SP-6)).